The sequence spans 151 residues: Large ribosomal subunit protein uL13 (151 aa).

The protein belongs to the universal ribosomal protein uL13 family. In terms of assembly, part of the 50S ribosomal subunit.

This protein is one of the early assembly proteins of the 50S ribosomal subunit, although it is not seen to bind rRNA by itself. It is important during the early stages of 50S assembly. The sequence is that of Large ribosomal subunit protein uL13 from Picosynechococcus sp. (strain ATCC 27264 / PCC 7002 / PR-6) (Agmenellum quadruplicatum).